The primary structure comprises 218 residues: Cytochrome b6 (218 aa).

The chain crosses the membrane as a helical span at residues 35–55; sequence IFYCLGGITLVCFLIQFATGF. Cys-38 contributes to the heme c binding site. Residues His-89 and His-103 each contribute to the heme b site. 3 helical membrane passes run 93 to 113, 119 to 139, and 189 to 209; these read ASMMVLMLILHVFRVYLTGGF, LTWVTGVVMAVITVAFGVTGY, and LHTFVLPWSLAVFMLMHFLMI. Heme b-binding residues include His-190 and His-205.

It belongs to the cytochrome b family. PetB subfamily. As to quaternary structure, the 4 large subunits of the cytochrome b6-f complex are cytochrome b6, subunit IV (17 kDa polypeptide, PetD), cytochrome f and the Rieske protein, while the 4 small subunits are PetG, PetL, PetM and PetN. The complex functions as a dimer. Requires heme b as cofactor. The cofactor is heme c.

The protein localises to the cellular thylakoid membrane. Component of the cytochrome b6-f complex, which mediates electron transfer between photosystem II (PSII) and photosystem I (PSI), cyclic electron flow around PSI, and state transitions. The sequence is that of Cytochrome b6 from Prochlorococcus marinus (strain MIT 9515).